Consider the following 2174-residue polypeptide: MPVGDDKLVEALRASLKETENLRARNRELRAAAREPVAVVAMGCRFPGGVKSPEDLWHLVAEGTDAISPFPADRGWDTDSLFDSDPGRPGHTYVLEGGFLDDAAEFDADLFGISPREAVAMDPQQRLLLETAWETFERAGINPASLRGRPVGTFVGSVLTTNGGGAEPAEGSEGHQLTGSAASVLSGRLAYTFGLEGPAVTVDTACSAALASVHLAVQALRQRECAMALAGGSAVLTTPGIFVEFSRQRGLAPDGRCKPFAAAADGTGWGEGVGLVLLERLSDARRRGHPVLAVIRGSAVNQDGASNGLTAPNGPSQQRVIRQALAAARLSADLVDAVEAHGTGTTLGDPIEAQALLATYGQDRPADRPLWLGSVKSNLGHTQGAAGIAGLIKMVLAMRHGVLPRTLHIDRPTPHVDWSSGAVRLLTENREWPPTGRPRRAAVSSFGISGTNAHVILEQAPAEGEMTDGPEGADIPAVGLPLVLSARGDRALRQQAERLAAHLRARSGLRPPDVGHSLVTSRATLDQRAVVWSGDRDGLLAGLDALAQDRPAPGLTRGTATEGALAFLFSGQGSQRPGMGRQLAGEFPVFAEALDEAAGHLDPRLDRPLREILHAEEGTPRAALLEQTAFTQAALFAYEMAMFRLLTHWGITPALLLGHSVGELAAAHAAGVFSLEDACTLVAARGRLMQRMPGTGAMVAIQATEAEVLPLVAARAGEISLAAVNGPCSVVVSGAEGAVLEVAGYWKERGRRTSRLRVSHAFHSPQMTGMLQEFGEVAGKLEFHPPRIPVVSNLTGEIATDEQLCSPEYWVRHAQAPVRFHTGMRALVAAGVRTFMEVGPSGTLTAMAQDCLAEQPAATGAVVIPVARSGRPETGTTLAAVSRAFVQGTPVDWTRFFPQTGNRRVELPTYPFQRRGYPWSRASATAQVTAAGLAGLRHPLLGACLELADGQGTVFSGRLSRRTESWLAHHKVLGTALVPGTAIVEMALRAGTEARCGRLVELTQEAPLTLPDQGAVHLQVRVGAPGENGHRSLGVYSRPEEAPDWVCHARGQLAPEAAAPPAAPGEDWPPPGAEPVPLEGFYERLAAEGLDYGPAFRGLSRAWRLGEAVFAELALDRTARAGAGAYGVHPALLDSALHLALLDGALAGRSRLRIPFAWQDVSCHGAGAPALRARLTPAGTDSVSLALWDEHGAPVASVGSLVTRPITAGQLRATRTQDTLFHLNWAAAEPVPGAAPGCVVLGDDDLAAAVAAPGLPGPEALLAALDSGESIPGLVLLPCRAPDADTPDADDPLAAARSLTGRVLEVIHHWLTDARLTDSRLAVITRGALSAADGEPVTDPAAAALWGLVRSAQSEHPGRFLLADLDGHPGSTAALPAALSGNEPQLALREGRLLVPRLARGVPEGSLMPPPGAAEWRVAPAGGGTVDDLVLAPCPEAAAPLAPGQVRVAVRAAGLNFRDVVMALGMVADQRALGGEIAGVVTEVGPDVPGLAPGDRVFGLAAGCLGPVAVADHRLIAPMPPDWSFPQAAAVPVTFLTAFHGLVDLAGLRAGEKVLIHAAAGGVGIAAVQLARHLGAEVFATASPAKWDAVRALGVDEGHLASSRTGEFEARFAGSGGVDVVLNSLTGELLDASLRLLRPGGRFVEMGKTDIRDAARIAGEHQGVRYRAFDLMDAGPGRIAEMLAEILALFERGRLRPVPVRTWDVRQAPAAFRFLAQARNVGKLVLTMPPAWDPSGTILVTGGYGALGTEVARHLVRTGRARHLLLAGRRGPEAEGMAELTEELRKLGALSVRAVACDMAERASVAELLASVPAEHPLTAVVHTAGVVDDGLLESMTPRRLDTVFRPKADGAWHLHELTRDRELAAFVLFSSAAGTLGAAGQANYAAANAFLDALAAHRRDAGLPATALAWGMWAGTGGMAAALDRAGLDRVSRSGIAGLSTEDGLALFDAALAADRAVWLPIRFHTPALRTAAGQGSLPPLLRGLAGTPADPAAPAGAANALRERLAALAPGERRPAVRELVRGQVAAVLGHPTAETVDPQRPFKELGFDSLTAVELRNRLGAMTGLTLPSTLVFDHPTPDALTDAIEARLPAGPGAPAESFLARLDDWAAGLAAAPLDQDERERVAARLRALALRWEEGTRPQDTGPAVAGELDLATDEEVIDFISNELGIS.

Positions 34 to 459 constitute a Ketosynthase family 3 (KS3) domain; the sequence is REPVAVVAMG…GTNAHVILEQ (426 aa). Active-site for beta-ketoacyl synthase activity residues include Cys-206, His-341, and His-381. Residues 567–888 form the Malonyl-CoA:ACP transacylase (MAT) domain; it reads FLFSGQGSQR…AAVSRAFVQG (322 aa). Residues 938 to 1060 form an N-terminal hotdog fold region; it reads HPLLGACLEL…GQLAPEAAAP (123 aa). Positions 938–1212 constitute a PKS/mFAS DH domain; sequence HPLLGACLEL…TRPITAGQLR (275 aa). His-970 acts as the Proton acceptor; for dehydratase activity in catalysis. The interval 1056–1075 is disordered; the sequence is EAAAPPAAPGEDWPPPGAEP. A compositionally biased stretch (pro residues) spans 1061–1074; the sequence is PAAPGEDWPPPGAE. A C-terminal hotdog fold region spans residues 1073–1212; that stretch reads AEPVPLEGFY…TRPITAGQLR (140 aa). The active-site Proton donor; for dehydratase activity is the Asp-1134. An Enoyl reductase (ER) domain is found at 1424–1726; sequence GTVDDLVLAP…QARNVGKLVL (303 aa). A Ketoreductase (KR) domain is found at 1736-1915; it reads GTILVTGGYG…ATALAWGMWA (180 aa). The region spanning 2017-2092 is the Carrier domain; it reads PAVRELVRGQ…ALTDAIEARL (76 aa). O-(pantetheine 4'-phosphoryl)serine is present on Ser-2052.

The spectinabilin polyketide synthase complex is composed of 4 proteins, NorA, NorA', NorB and NorC. The complex comprises 6 modules with a total of 28 catalytic domains catalyzing 7 chain elongations. NorA comprises one module, NorA' two modules, NorB one module and NorC two modules. Pantetheine 4'-phosphate serves as cofactor.

It carries out the reaction 4-nitrobenzoyl-CoA + 6 (S)-methylmalonyl-CoA + malonyl-CoA + 6 NADPH + 12 H(+) = demethyldeoxyspectinabilin + 7 CO2 + 6 NADP(+) + 8 CoA + 5 H2O. Its pathway is antibiotic biosynthesis. It participates in polyketide biosynthesis. Its function is as follows. Component of a type I modular polyketide synthase (PKS) that generates the backbone of the antibiotic spectinabilin (also known as neoaureothin), a nitroaryl-substituted polyketide metabolite. This PKS system accepts the unusual starter unit 4-nitrobenzoyl-CoA and extends it by 6 molecules of (S)-methylmalonyl-CoA and a single molecule of malonyl-CoA. The sequence is that of Spectinabilin polyketide synthase system protein NorB from Streptomyces orinoci (Streptoverticillium orinoci).